Reading from the N-terminus, the 510-residue chain is NAD(P)H-quinone oxidoreductase subunit 2, chloroplastic (510 aa).

Helical transmembrane passes span 24–44, 59–79, 99–119, 124–144, 149–169, 183–203, 229–249, 295–315, 323–343, 347–367, 395–415, 418–438, and 484–504; these read LLLFHGSFIFPECILIFGLIL, WFYFISSTSLVMSITALLFRW, IFQFLILLCSTLCIPLSVEYI, MAITEFLLFVLTATLGGMFLC, XITIFVAPECFSLCSYLLSGY, YLLMGGASSSILVHGFSWLYG, ISIALISITVGIGFKLSPAPF, WHLLLEILAILSMILGNLIAI, MLAYSSIGQIGYVIIGIIVGD, GYASMITYMLFYISMNLGTFA, ALSSALCLLSLGGLPPLAGFF, LHLFWCGWQAGLYFLVSIGLL, and MTVCVIAXTIPGISMNPILAI.

This sequence belongs to the complex I subunit 2 family. In terms of assembly, NDH is composed of at least 16 different subunits, 5 of which are encoded in the nucleus.

It is found in the plastid. Its subcellular location is the chloroplast thylakoid membrane. It carries out the reaction a plastoquinone + NADH + (n+1) H(+)(in) = a plastoquinol + NAD(+) + n H(+)(out). It catalyses the reaction a plastoquinone + NADPH + (n+1) H(+)(in) = a plastoquinol + NADP(+) + n H(+)(out). In terms of biological role, NDH shuttles electrons from NAD(P)H:plastoquinone, via FMN and iron-sulfur (Fe-S) centers, to quinones in the photosynthetic chain and possibly in a chloroplast respiratory chain. The immediate electron acceptor for the enzyme in this species is believed to be plastoquinone. Couples the redox reaction to proton translocation, and thus conserves the redox energy in a proton gradient. The sequence is that of NAD(P)H-quinone oxidoreductase subunit 2, chloroplastic from Narcissus elegans (Daffodil).